Consider the following 474-residue polypeptide: RNA-binding protein Nova-1 (474 aa).

Over residues Met1 to His12 the composition is skewed to polar residues. A disordered region spans residues Met1–Thr43. Positions Lys26–Asn42 match the Bipartite nuclear localization signal motif. KH domains are found at residues Gln48 to Ile115, Ile146 to Ile212, and Lys396 to Ile463. A required for RNA binding region spans residues Gly394–Arg474.

In terms of assembly, interacts with PTBP2; the interaction is direct.

The protein resides in the nucleus. Functionally, functions to regulate alternative splicing in neurons by binding pre-mRNA in a sequence-specific manner to activate exon inclusion or exclusion. It binds specifically to the sequences 5'-YCAY-3' and regulates splicing in only a subset of regulated exons. Binding to an exonic 5'-YCAY-3' cluster changes the protein complexes assembled on pre-mRNA, blocking U1 snRNP binding and exon inclusion, whereas binding to an intronic 5'-YCAY-3' cluster enhances spliceosome assembly and exon inclusion. Binding to 5'-YCAY-3' clusters results in a local and asymmetric action to regulate spliceosome assembly and alternative splicing in neurons. Binding to an exonic 5'-YCAY-3' cluster changed the protein complexes assembled on pre-mRNA, blocking U1 snRNP (small nuclear ribonucleoprotein) binding and exon inclusion, whereas binding to an intronic 5'-YCAY-3' cluster enhanced spliceosome assembly and exon inclusion. With NOVA1, they perform unique biological functions in different brain areas and cell types. Autoregulates its own expression by acting as a splicing repressor. Acts to activate the inclusion of exon E3A in the glycine receptor alpha-2 chain and of exon E9 in gamma-aminobutyric-acid receptor gamma-2 subunit via a distal downstream UCAU-rich intronic splicing enhancer. Acts to regulate a novel glycine receptor alpha-2 chain splice variant (alpha-2N) in developing spinal cord. This Rattus norvegicus (Rat) protein is RNA-binding protein Nova-1.